Consider the following 431-residue polypeptide: O-Mevalon transferase macI (431 aa).

Residue Asn176 is glycosylated (N-linked (GlcNAc...) asparagine). 4 consecutive transmembrane segments (helical) span residues 198 to 218, 301 to 321, 336 to 356, and 404 to 424; these read IYAL…AILM, LLMM…YQVT, YFAL…VLGI, and LFAA…NFVA.

It belongs to the wax synthase family.

Its subcellular location is the membrane. The protein operates within secondary metabolite biosynthesis; terpenoid biosynthesis. O-Mevalon transferase; part of the gene cluster that mediates the biosynthesis of macrophorins, isoprenoid epoxycyclohexenones containing cyclized drimane moieties. The first step of the pathway is the synthesis of 6-methylsalicylic acid (6-MSA) by the polyketide synthase macA. 6-MSA is then converted to m-cresol by the decarboxylase macB. The cytochrome P450 monooxygenase macC then catalyzes the oxidation of m-cresol to toluquinol. Epoxidation of toluquinol is then performed by the short chain dehydrogenase macD, with the help of macE, and a further prenylation by macG leads to 7-deacetoxyyanuthone A. The next step is the hydroxylation of C-22 of 7-deacetoxyyanuthone A by the cytochrome P450 monooxygenase macH to yield 22-deacetylyanuthone A. O-Mevalon transferase macI then attaches mevalon to the hydroxyl group of 22-deacetylyanuthone A to produce yanuthone E. The terpene cyclase macJ catalyzes the cyclization of 22-deacetylyanuthone A to macrophorin A. MacJ is also able to catalyze cyclization of yanuthone E and 7-deacetoxyyanuthone A to their corresponding macrophorins. The macJ products can be further modified by macH and macJ, as well as by the FAD-dependent monooxygenase macF, to produce additional macrophorins, including 4'-oxomacrophorin A, 4'-oxomacrophorin D and 4'-oxomacrophorin E. The chain is O-Mevalon transferase macI from Penicillium terrestre.